A 239-amino-acid chain; its full sequence is Orotidine 5'-phosphate decarboxylase (239 aa).

Residues aspartate 15, lysine 37, aspartate 64–threonine 73, threonine 126, arginine 187, glutamine 196, glycine 216, and arginine 217 contribute to the substrate site. Residue lysine 66 is the Proton donor of the active site.

The protein belongs to the OMP decarboxylase family. Type 1 subfamily. Homodimer.

The enzyme catalyses orotidine 5'-phosphate + H(+) = UMP + CO2. The protein operates within pyrimidine metabolism; UMP biosynthesis via de novo pathway; UMP from orotate: step 2/2. Functionally, catalyzes the decarboxylation of orotidine 5'-monophosphate (OMP) to uridine 5'-monophosphate (UMP). The polypeptide is Orotidine 5'-phosphate decarboxylase (Geotalea daltonii (strain DSM 22248 / JCM 15807 / FRC-32) (Geobacter daltonii)).